The chain runs to 428 residues: Trigger factor (428 aa).

The region spanning 166 to 250 is the PPIase FKBP-type domain; the sequence is GDIVTFDFKG…IKNIKEKILP (85 aa).

The protein belongs to the FKBP-type PPIase family. Tig subfamily.

It is found in the cytoplasm. It carries out the reaction [protein]-peptidylproline (omega=180) = [protein]-peptidylproline (omega=0). In terms of biological role, involved in protein export. Acts as a chaperone by maintaining the newly synthesized protein in an open conformation. Functions as a peptidyl-prolyl cis-trans isomerase. This Mycoplasma capricolum subsp. capricolum (strain California kid / ATCC 27343 / NCTC 10154) protein is Trigger factor.